The primary structure comprises 396 residues: MTNEEPLPKKVRLSETDFKVMARDELILRWKQYEAYVQALEGKYTDLNSNDVTGLRESEEKLKQQQQESARRENILVMRLATKEQEMQECTTQIQYLKQVQQPSVAQLRSTMVDPAINLFFLKMKGELEQTKDKLEQAQNELSAWKFTPDSQTGKKLMAKCRMLIQENQELGRQLSQGRIAQLEAELALQKKYSEELKSSQDELNDFIIQLDEEVEGMQSTILVLQQQLKETRQQLAQYQQQQSQASAPSTSRTTSSEPVDQAEVTSKDCSRLANGPSNGSSSRQRTSGSGFHREGSTPEDDFPSSSGNGNKASNSSEERTGRGGSSYINPLSAGYESVDSPTGSENSLTHHSNDTDSSHDPQEEKAVSGKGNRTVGSRHVQNGLDSSVNVQGAVL.

Residue M1 is modified to N-acetylmethionine. S14 is modified (phosphoserine). 2 stretches are compositionally biased toward low complexity: residues 240–257 and 278–291; these read QQQQ…TTSS and SNGS…SGSG. Positions 240–396 are disordered; sequence QQQQSQASAP…SSVNVQGAVL (157 aa). 4 positions are modified to phosphoserine: S297, S305, S306, and S341. A compositionally biased stretch (low complexity) spans 305–316; that stretch reads SSSGNGNKASNS. A compositionally biased stretch (polar residues) spans 340 to 351; the sequence is DSPTGSENSLTH. Residue T350 is modified to Phosphothreonine. Residues 352-368 are compositionally biased toward basic and acidic residues; the sequence is HSNDTDSSHDPQEEKAV. Positions 380 to 396 are enriched in polar residues; the sequence is HVQNGLDSSVNVQGAVL. Phosphoserine is present on S388.

The protein belongs to the fl(2)d family. In terms of assembly, component of the WMM complex, a N6-methyltransferase complex composed of a catalytic subcomplex, named MAC, and of an associated subcomplex, named MACOM. The MAC subcomplex is composed of METTL3 and METTL14. The MACOM subcomplex is composed of WTAP, ZC3H13, CBLL1/HAKAI, VIRMA, and, in some cases of RBM15 (RBM15 or RBM15B). Interacts with WT1. Also a component of a MACOM-like complex, named WTAP complex, composed of WTAP, ZC3H13, CBLL1, VIRMA, RBM15, BCLAF1 and THRAP3. Interacts with CPNE4 (via VWFA domain).

Its subcellular location is the nucleus speckle. It localises to the nucleus. The protein resides in the nucleoplasm. It is found in the cytoplasm. Its function is as follows. Associated component of the WMM complex, a complex that mediates N6-methyladenosine (m6A) methylation of RNAs, a modification that plays a role in the efficiency of mRNA splicing and RNA processing. Acts as a key regulator of m6A methylation by promoting m6A methylation of mRNAs at the 3'-UTR. Required for accumulation of METTL3 and METTL14 to nuclear speckle. Acts as a mRNA splicing regulator. Regulates G2/M cell-cycle transition by binding to the 3' UTR of CCNA2, which enhances its stability. Impairs WT1 DNA-binding ability and inhibits expression of WT1 target genes. The protein is Pre-mRNA-splicing regulator WTAP of Mus musculus (Mouse).